The sequence spans 312 residues: Apulose-4-phosphate transketolase subunit B (312 aa).

Belongs to the transketolase family. Probable heterodimer composed of AptA and AptB. The cofactor is thiamine diphosphate.

The enzyme catalyses apulose 4-phosphate + D-glyceraldehyde 3-phosphate = D-xylulose 5-phosphate + dihydroxyacetone phosphate. It functions in the pathway carbohydrate metabolism. Involved in catabolism of D-apiose. Catalyzes the transfer of the glycolaldehyde group from apulose-4-phosphate to D-glyceraldehyde 3-phosphate, generating dihydroxyacetone phosphate and D-xylulose-5-phosphate. The sequence is that of Apulose-4-phosphate transketolase subunit B from Phocaeicola vulgatus (strain ATCC 8482 / DSM 1447 / JCM 5826 / CCUG 4940 / NBRC 14291 / NCTC 11154) (Bacteroides vulgatus).